The following is an 880-amino-acid chain: Alanine--tRNA ligase (880 aa).

4 residues coordinate Zn(2+): H566, H570, C668, and H672.

Belongs to the class-II aminoacyl-tRNA synthetase family. Zn(2+) is required as a cofactor.

The protein localises to the cytoplasm. It carries out the reaction tRNA(Ala) + L-alanine + ATP = L-alanyl-tRNA(Ala) + AMP + diphosphate. Its function is as follows. Catalyzes the attachment of alanine to tRNA(Ala) in a two-step reaction: alanine is first activated by ATP to form Ala-AMP and then transferred to the acceptor end of tRNA(Ala). Also edits incorrectly charged Ser-tRNA(Ala) and Gly-tRNA(Ala) via its editing domain. This is Alanine--tRNA ligase from Alkaliphilus oremlandii (strain OhILAs) (Clostridium oremlandii (strain OhILAs)).